A 34-amino-acid polypeptide reads, in one-letter code: uncharacterized protein (34 aa).

Residues 10-30 (LIITSSFFAIAVVLVLSVLLI) form a helical membrane-spanning segment.

It is found in the membrane. This is an uncharacterized protein from Escherichia coli O157:H7.